The primary structure comprises 267 residues: Potassium channel regulatory protein (267 aa).

The 70-residue stretch at 5 to 74 folds into the BTB domain; that stretch reads ELVTLNVGGK…LRTQQLLLPT (70 aa).

As to quaternary structure, can form homooligomers. Interacts with KCNA1 (via cytoplasmic N-terminal domain) and KCNA4.

The protein resides in the endoplasmic reticulum. Inhibits potassium fluxes in cells. May regulate Kv1 family channel proteins by retaining a fraction of channels in endomembranes. This chain is Potassium channel regulatory protein (KCNRG), found in Bos taurus (Bovine).